We begin with the raw amino-acid sequence, 447 residues long: SVGFKAGVKDYRLTYYTPDYETKDTDILAAFRVTPQPGVPPEEAGAAVAAESSTGTWTTVWTDGLTSLDRYKGRCYHIEAVVGEENQFIAYVAYPLDLFEEGSVTNMFTSIVGNVFGFKALRALRLEDLRIPPAYSKTFQGPPHGIQVERDKLNKYGRPLLGCTIKPKLGLSAKNYGRAVYECLRGGLDFTKDDENVNSQPFMRWRDRFLFCAEAIYKAQAETGEIKGHYLNATAGTCEEMIKRAIFARELGVPIVMHDYLTGGFTANTSLAHYCRDNGLLLHIHRAMHAVIDRQKNHGMHFRVLAKALRMSGGDHIHAGTVVGKLEGEREMTLGFVDLLRDDFIEKDRSRGIFFTQDWVSMPGVIPVASGGIHVWHMPALTEIFGDDSVLQFGGGTLGHPWGNAPGAVANRVALEACVQARNEGRDLAQEGNEIIREACKWSPELA.

K5 is modified (N6,N6,N6-trimethyllysine). Substrate-binding residues include N114 and T164. Residue K166 is the Proton acceptor of the active site. K168 provides a ligand contact to substrate. The Mg(2+) site is built by K192, D194, and E195. The residue at position 192 (K192) is an N6-carboxylysine. Residue H285 is the Proton acceptor of the active site. R286, H318, and S370 together coordinate substrate.

The protein belongs to the RuBisCO large chain family. Type I subfamily. As to quaternary structure, heterohexadecamer of 8 large chains and 8 small chains; disulfide-linked. The disulfide link is formed within the large subunit homodimers. The cofactor is Mg(2+). Post-translationally, the disulfide bond which can form in the large chain dimeric partners within the hexadecamer appears to be associated with oxidative stress and protein turnover.

Its subcellular location is the plastid. It is found in the chloroplast. It carries out the reaction 2 (2R)-3-phosphoglycerate + 2 H(+) = D-ribulose 1,5-bisphosphate + CO2 + H2O. It catalyses the reaction D-ribulose 1,5-bisphosphate + O2 = 2-phosphoglycolate + (2R)-3-phosphoglycerate + 2 H(+). In terms of biological role, ruBisCO catalyzes two reactions: the carboxylation of D-ribulose 1,5-bisphosphate, the primary event in carbon dioxide fixation, as well as the oxidative fragmentation of the pentose substrate in the photorespiration process. Both reactions occur simultaneously and in competition at the same active site. This chain is Ribulose bisphosphate carboxylase large chain, found in Camassia leichtlinii (Western quamash).